Reading from the N-terminus, the 308-residue chain is Ribosomal RNA large subunit methyltransferase F (308 aa).

Belongs to the methyltransferase superfamily. METTL16/RlmF family.

Its subcellular location is the cytoplasm. It carries out the reaction adenosine(1618) in 23S rRNA + S-adenosyl-L-methionine = N(6)-methyladenosine(1618) in 23S rRNA + S-adenosyl-L-homocysteine + H(+). Specifically methylates the adenine in position 1618 of 23S rRNA. The chain is Ribosomal RNA large subunit methyltransferase F from Salmonella agona (strain SL483).